We begin with the raw amino-acid sequence, 462 residues long: Tissue alpha-L-fucosidase (462 aa).

The signal sequence occupies residues 1–28; the sequence is MWDLKSEWWAVGFGLLLLLAASAQAGGL. N-linked (GlcNAc...) asparagine glycosylation is found at N237, N264, and N378.

This sequence belongs to the glycosyl hydrolase 29 family. Homotetramer.

It localises to the lysosome. It catalyses the reaction an alpha-L-fucoside + H2O = L-fucose + an alcohol. The enzyme catalyses a neolactoside IV(2)-alpha-Fuc-nLc4Cer(d18:1(4E)) + H2O = a neolactoside nLc4Cer(d18:1(4E)) + L-fucose. It carries out the reaction a neolactoside IV(2)-alpha-Fuc-nLc4Cer(d18:0) + H2O = a neolactoside nLc4Cer(d18:0) + L-fucose. Functionally, alpha-L-fucosidase is responsible for hydrolyzing the alpha-1,6-linked fucose joined to the reducing-end N-acetylglucosamine of the carbohydrate moieties of glycoproteins. The chain is Tissue alpha-L-fucosidase (Fuca1) from Rattus norvegicus (Rat).